A 691-amino-acid chain; its full sequence is Methionine--tRNA ligase (691 aa).

A 'HIGH' region motif is present at residues Pro14–His24. Residues Cys148, Cys151, Cys161, and Cys164 each contribute to the Zn(2+) site. The 'KMSKS' region signature appears at Lys344–Ser348. ATP is bound at residue Lys347. Positions Asp585–Arg691 constitute a tRNA-binding domain.

This sequence belongs to the class-I aminoacyl-tRNA synthetase family. MetG type 1 subfamily. In terms of assembly, homodimer. Zn(2+) is required as a cofactor.

Its subcellular location is the cytoplasm. The catalysed reaction is tRNA(Met) + L-methionine + ATP = L-methionyl-tRNA(Met) + AMP + diphosphate. Its function is as follows. Is required not only for elongation of protein synthesis but also for the initiation of all mRNA translation through initiator tRNA(fMet) aminoacylation. This is Methionine--tRNA ligase from Verminephrobacter eiseniae (strain EF01-2).